A 161-amino-acid chain; its full sequence is RNA pyrophosphohydrolase (161 aa).

One can recognise a Nudix hydrolase domain in the interval 12-154 (PYRPGVGMMI…KRKLYQAVVK (143 aa)). Residues 46 to 67 (GGIVPGETPSIAAMREMLEEIG) carry the Nudix box motif.

Belongs to the Nudix hydrolase family. RppH subfamily. A divalent metal cation serves as cofactor.

Its function is as follows. Accelerates the degradation of transcripts by removing pyrophosphate from the 5'-end of triphosphorylated RNA, leading to a more labile monophosphorylated state that can stimulate subsequent ribonuclease cleavage. In Rickettsia africae (strain ESF-5), this protein is RNA pyrophosphohydrolase.